A 457-amino-acid chain; its full sequence is PDZ and LIM domain protein 7 (457 aa).

The region spanning 1-85 is the PDZ domain; it reads MDSFKVVLEG…RLSLGLSRAQ (85 aa). Phosphoserine is present on Ser-78. Disordered stretches follow at residues 82–142, 176–226, and 239–258; these read SRAQ…LVPD, TEFM…PWAV, and TSTV…LQSR. Asymmetric dimethylarginine is present on Arg-103. Ser-111 is modified (phosphoserine). The segment covering 208 to 221 has biased composition (pro residues); that stretch reads EPWPGPTAPSPTSR. Ser-247 bears the Phosphoserine mark. 3 consecutive LIM zinc-binding domains span residues 280–338, 339–398, and 399–457; these read PVCH…VRYA, PSCA…MFGT, and KCHG…FSHV.

Binds via its LIM zinc-binding 3 domain (LIM 3) to endocytic codes of INSR, but not with those of IGF1R, LDLR, TFRC, or EGFR. Interacts with various PKC isoforms through the LIM zinc-binding domains. Binds to RET in a phosphorylation-independent manner via its LIM zinc-binding domain 2 (LIM 2). Probably part of a complex with SHC and the RET dimer. Interacts with TPM2. Interacts with TBX4 and TBX5. As to expression, isoform 1 and isoform 2 are expressed ubiquitously, however, isoform 2 predominates in skeletal muscle, isoform 1 is more abundant in lung, spleen, leukocytes and fetal liver.

Its subcellular location is the cytoplasm. The protein localises to the cytoskeleton. Its function is as follows. May function as a scaffold on which the coordinated assembly of proteins can occur. May play a role as an adapter that, via its PDZ domain, localizes LIM-binding proteins to actin filaments of both skeletal muscle and nonmuscle tissues. Involved in both of the two fundamental mechanisms of bone formation, direct bone formation (e.g. embryonic flat bones mandible and cranium), and endochondral bone formation (e.g. embryonic long bone development). Plays a role during fracture repair. Involved in BMP6 signaling pathway. The sequence is that of PDZ and LIM domain protein 7 (PDLIM7) from Homo sapiens (Human).